Reading from the N-terminus, the 187-residue chain is UPF0398 protein MW1336 (187 aa).

The protein belongs to the UPF0398 family.

This Staphylococcus aureus (strain MW2) protein is UPF0398 protein MW1336.